The sequence spans 130 residues: MRCVCASIRRTRIIEFLMFFALSSSTASCAPFSVSNVTHASPRPRWLRWHEKTSMAGNPVSLSIATPNGAKSSSICSANTVGFTPDTYTCPDIRDSSTDTLSRSKRISSLSLTKPISSSSESETKVLSAS.

An N-terminal signal peptide occupies residues 1–29 (MRCVCASIRRTRIIEFLMFFALSSSTASC). A glycan (N-linked (GlcNAc...) asparagine) is linked at Asn36. Residues 45–48 (RWLR) carry the RxLR motif.

Belongs to the RxLR effector family.

The protein resides in the secreted. It is found in the host cytoplasm. It localises to the host nucleus. Functionally, effector that acts as a broad suppressor of cell death to interrupt plant immunity. Inhibits cell death induced by cell death-inducing proteins, including the PAMP elicitor INF1 from P.infestans. This is Secreted RxLR effector protein 68 from Plasmopara viticola (Downy mildew of grapevine).